A 460-amino-acid chain; its full sequence is MDSIVTTEDTIAAIASAISIGKGGVAIIRVSGKDSINSCKKIVQTKSKYAWESHRVFHGFIQENKQNKFIDEVLISVMKSPNSFTGEDVVELHCHGGIIIVNKVLKILLSSNSRVRLANPGEFSQRAFLNGKIDLTQAESINQLINASNTRSAELAFSGIQGEIKKKINDIKNDLINQLCEIEARVDFEEDFTDFDYTKYLKNIKKVKEKIELLIENAKRNSYIHNGISIALIGKTNVGKSSLLNLLAKKEKAIVTNIPGTTRDVIEINLTINDIPMKIIDTAGIRETSEQIERIGIKKSFRKIKESDFIIYIYSLEEGFNEEDKKIIQEIPKEKLITILGNKKDLIDCKNINSNELKNTILMSIKNNDGERLLIDTIIKKCGLKQVENINIFLNERHLANLSACLSNLNDTDEIIKNKLPFDLLSIELRDGIQNLSKITGQELTEELLDNIFSKFCIGK.

(6S)-5-formyl-5,6,7,8-tetrahydrofolate contacts are provided by Arg-29, Glu-91, and Lys-132. Residues 227 to 383 enclose the TrmE-type G domain; the sequence is GISIALIGKT…LIDTIIKKCG (157 aa). Residue Asn-237 coordinates K(+). Residues 237 to 242, 256 to 262, and 281 to 284 contribute to the GTP site; these read NVGKSS, TNIPGTT, and DTAG. Mg(2+) is bound at residue Ser-241. Residues Thr-256, Ile-258, and Thr-261 each contribute to the K(+) site. Thr-262 serves as a coordination point for Mg(2+). Lys-460 contacts (6S)-5-formyl-5,6,7,8-tetrahydrofolate.

This sequence belongs to the TRAFAC class TrmE-Era-EngA-EngB-Septin-like GTPase superfamily. TrmE GTPase family. In terms of assembly, homodimer. Heterotetramer of two MnmE and two MnmG subunits. It depends on K(+) as a cofactor.

It localises to the cytoplasm. Exhibits a very high intrinsic GTPase hydrolysis rate. Involved in the addition of a carboxymethylaminomethyl (cmnm) group at the wobble position (U34) of certain tRNAs, forming tRNA-cmnm(5)s(2)U34. This chain is tRNA modification GTPase MnmE, found in Prochlorococcus marinus (strain MIT 9215).